The chain runs to 24 residues: Brevinin-1Ra (24 aa).

A disulfide bridge links Cys18 with Cys24.

In terms of tissue distribution, expressed by the skin glands.

The protein resides in the secreted. Antimicrobial peptide. This chain is Brevinin-1Ra, found in Pelophylax ridibundus (Marsh frog).